The primary structure comprises 128 residues: uncharacterized protein (128 aa).

Its subcellular location is the mitochondrion. This is an uncharacterized protein from Saccharomyces cerevisiae (strain ATCC 204508 / S288c) (Baker's yeast).